The chain runs to 931 residues: Valine--tRNA ligase (931 aa).

The 'HIGH' region signature appears at 43–53; sequence PNVTGALHIGH. The interval 351–370 is disordered; the sequence is IPHTDKDGNAHDAEPRTIQT. Over residues 353 to 365 the composition is skewed to basic and acidic residues; sequence HTDKDGNAHDAEP. The short motif at 552–556 is the 'KMSKS' region element; that stretch reads KMSKS. Residue lysine 555 participates in ATP binding. A disordered region spans residues 691 to 717; the sequence is LQGRGLGEGDEAVPAPADGPLSPALSP. The stretch at 864-930 forms a coiled coil; that stretch reads VIDIAAERER…DRLSAALARL (67 aa).

The protein belongs to the class-I aminoacyl-tRNA synthetase family. ValS type 1 subfamily. In terms of assembly, monomer.

The protein localises to the cytoplasm. The enzyme catalyses tRNA(Val) + L-valine + ATP = L-valyl-tRNA(Val) + AMP + diphosphate. In terms of biological role, catalyzes the attachment of valine to tRNA(Val). As ValRS can inadvertently accommodate and process structurally similar amino acids such as threonine, to avoid such errors, it has a 'posttransfer' editing activity that hydrolyzes mischarged Thr-tRNA(Val) in a tRNA-dependent manner. The polypeptide is Valine--tRNA ligase (Sphingopyxis alaskensis (strain DSM 13593 / LMG 18877 / RB2256) (Sphingomonas alaskensis)).